The chain runs to 145 residues: Basic phospholipase A2 KPA2 (145 aa).

The N-terminal stretch at 1-19 is a signal peptide; the sequence is MYPAHLLVLVAVCVSLLGA. Residues 20–27 constitute a propeptide that is removed on maturation; that stretch reads ANIPPQPL. Intrachain disulfides connect Cys38/Cys97, Cys52/Cys144, Cys54/Cys70, Cys69/Cys125, Cys76/Cys118, Cys86/Cys111, and Cys104/Cys116. Positions 53, 55, and 57 each coordinate Ca(2+). Residue His73 is part of the active site. Residue Asp74 participates in Ca(2+) binding. Residue Asp119 is part of the active site.

It belongs to the phospholipase A2 family. Group I subfamily. D49 sub-subfamily. Monomer. It depends on Ca(2+) as a cofactor. In terms of tissue distribution, expressed by the venom gland.

It is found in the secreted. It catalyses the reaction a 1,2-diacyl-sn-glycero-3-phosphocholine + H2O = a 1-acyl-sn-glycero-3-phosphocholine + a fatty acid + H(+). In terms of biological role, snake venom phospholipase A2 (PLA2) that shows anticoagulant and neurotoxic activities. PLA2 catalyzes the calcium-dependent hydrolysis of the 2-acyl groups in 3-sn-phosphoglycerides. This chain is Basic phospholipase A2 KPA2, found in Bungarus caeruleus (Indian krait).